A 563-amino-acid polypeptide reads, in one-letter code: Group II intron-interrupted relaxase LtrB (563 aa).

Tyrosine 44 is an active-site residue. Residues histidine 159 and histidine 161 each coordinate Mg(2+).

This sequence belongs to the mobilization (MOB) protein type 1 family. It depends on Mg(2+) as a cofactor. Requires Mn(2+) as cofactor.

Its function is as follows. Mediates initiation of conjugal transfer possibly by introducing a single-stranded nick at the potential origin of transfer. This is Group II intron-interrupted relaxase LtrB (ltrBE1) from Lactococcus lactis subsp. cremoris (strain MG1363).